Reading from the N-terminus, the 930-residue chain is Dual serine/threonine and tyrosine protein kinase (930 aa).

Over residues 1-14 (MEGDGVPWGSEPVS) the composition is skewed to low complexity. Positions 1 to 22 (MEGDGVPWGSEPVSGPGPGGGG) are disordered. Coiled coils occupy residues 190–216 (EEDL…MHHA) and 396–432 (RKKE…KEEL). Positions 653 to 907 (PKLGQELGRG…PLLGIVQPML (255 aa)) constitute a Protein kinase domain. Residues 659-667 (LGRGQYGVV) and K682 contribute to the ATP site. D778 (proton acceptor) is an active-site residue.

This sequence belongs to the protein kinase superfamily. Ser/Thr protein kinase family.

Its subcellular location is the cytoplasm. It localises to the cell membrane. It is found in the apical cell membrane. The protein resides in the basolateral cell membrane. The protein localises to the cell junction. The catalysed reaction is L-seryl-[protein] + ATP = O-phospho-L-seryl-[protein] + ADP + H(+). It catalyses the reaction L-threonyl-[protein] + ATP = O-phospho-L-threonyl-[protein] + ADP + H(+). It carries out the reaction L-tyrosyl-[protein] + ATP = O-phospho-L-tyrosyl-[protein] + ADP + H(+). Acts as a positive regulator of ERK phosphorylation downstream of fibroblast growth factor-receptor activation. Involved in the regulation of both caspase-dependent apoptosis and caspase-independent cell death. In the skin, it plays a predominant role in suppressing caspase-dependent apoptosis in response to UV stress in a range of dermal cell types. This is Dual serine/threonine and tyrosine protein kinase (DSTYK) from Pan troglodytes (Chimpanzee).